We begin with the raw amino-acid sequence, 381 residues long: Mannitol-1-phosphate 5-dehydrogenase (381 aa).

Position 3–14 (3–14) interacts with NAD(+); that stretch reads TLHFGAGNIGRG.

This sequence belongs to the mannitol dehydrogenase family.

It catalyses the reaction D-mannitol 1-phosphate + NAD(+) = beta-D-fructose 6-phosphate + NADH + H(+). The chain is Mannitol-1-phosphate 5-dehydrogenase from Aeromonas salmonicida (strain A449).